The following is a 555-amino-acid chain: Zinc finger and SCAN domain-containing protein 21 (555 aa).

4 disordered regions span residues 1–74 (MTKV…SKDK), 102–133 (TIKAEEDDEKDKGHPSPEISRQRFRQFGYHDT), 204–243 (LDEPGLQVSSPPNEQKQSWEKMSTSGTAMESLSSTETQHV), and 263–354 (EEVF…RPAP). 3 tandem repeats follow at residues 18 to 56 (ESMGPSPIKVEEDEEKDKCCPTLELSHKHFRQSGNQDTL), 57 to 95 (EPMGPSTIKAEEDESKDKCRPNLEISRKSFKQFGYQDTL), and 96 to 134 (EQLGPSTIKAEEDDEKDKGHPSPEISRQRFRQFGYHDTP). Residues 18 to 134 (ESMGPSPIKV…FRQFGYHDTP (117 aa)) form a 3 X 39 AA approximate tandem repeats region. Lysine 26 participates in a covalent cross-link: Glycyl lysine isopeptide (Lys-Gly) (interchain with G-Cter in SUMO2). Positions 122 to 204 (RQRFRQFGYH…TLLEDLEQEL (83 aa)) constitute an SCAN box domain. A compositionally biased stretch (polar residues) spans 210–240 (QVSSPPNEQKQSWEKMSTSGTAMESLSSTET). Positions 280-302 (PQKEDSADEHRSSEEESHADGLK) are enriched in basic and acidic residues. Glycyl lysine isopeptide (Lys-Gly) (interchain with G-Cter in SUMO2) cross-links involve residues lysine 302 and lysine 313. The segment covering 316–332 (SRSERQWANNLERERGT) has biased composition (basic and acidic residues). C2H2-type zinc fingers lie at residues 359–381 (YICAECGKAFSNSSNLTKHRRTH), 387–409 (YVCTKCGKAFSHSSNLTLHYRTH), 415–436 (YDCKCGKAFGQSSDLLKHQRMH), 442–464 (YQCKDCGKAFSGKGSLIRHYRIH), 470–492 (YQCNECGKSFSQHAGLSSHQRLH), 498–520 (YKCKECGKAFNHSSNFNKHHRIH), and 526–548 (YWCSHCGKTFCSKSNLSKHQRVH). Lysine 431 is covalently cross-linked (Glycyl lysine isopeptide (Lys-Gly) (interchain with G-Cter in SUMO2)).

It belongs to the krueppel C2H2-type zinc-finger protein family. As to expression, expressed predominantly in the spermatocytes and spermatids of adult testes. It is also present at lower levels in the ovary, brain, spleen, embryo and fetus.

Its subcellular location is the nucleus. In terms of biological role, strong transcriptional activator. Plays an important role in spermatogenesis; essential for the progression of meiotic prophase I in spermatocytes. The sequence is that of Zinc finger and SCAN domain-containing protein 21 (Zscan21) from Mus musculus (Mouse).